The primary structure comprises 400 residues: Subtilisin-like protease 7 (400 aa).

The signal sequence occupies residues 1 to 20; the sequence is MGFITKAIPLALAAASVING. Residues 21–119 constitute a propeptide that is removed on maturation; sequence AEILETRAGV…IERDARVQIN (99 aa). The 83-residue stretch at 36–118 folds into the Inhibitor I9 domain; sequence KYIVVMNDGI…YIERDARVQI (83 aa). Residues 129-400 form the Peptidase S8 domain; sequence SWGLARVGSK…SKLINNGSGM (272 aa). Active-site charge relay system residues include Asp161 and His192. N-linked (GlcNAc...) asparagine glycosylation is found at Asn222 and Asn252. Catalysis depends on Ser346, which acts as the Charge relay system. N-linked (GlcNAc...) asparagine glycosylation is present at Asn396.

Belongs to the peptidase S8 family.

The protein localises to the secreted. In terms of biological role, secreted subtilisin-like serine protease with keratinolytic activity that contributes to pathogenicity. In Trichophyton soudanense, this protein is Subtilisin-like protease 7 (SUB7).